We begin with the raw amino-acid sequence, 244 residues long: MAEFNLEALNALPKDEQVAALAAVNGQLEQLSAQERVSWALENLPGDFVLSSSFGIQAAISLHLVTQQRPDIPVILTDTGYLFPETYQFIDALTEQLKLNLHVYRAAESPAWQESRYGKLWDQGVEGIERYNLLNKVEPMNRALSELNAGTWFAGLRREQSGSRGELPVLAIQRGVFKFLPIIDWDNRTVYQYLKENGLSYHPLWDQGYLSVGDTHTTRKWEPGMSEEETRFFGLKRECGLHEG.

The Nucleophile; cysteine thiosulfonate intermediate role is filled by cysteine 239.

The protein belongs to the PAPS reductase family. CysH subfamily.

Its subcellular location is the cytoplasm. The catalysed reaction is [thioredoxin]-disulfide + sulfite + adenosine 3',5'-bisphosphate + 2 H(+) = [thioredoxin]-dithiol + 3'-phosphoadenylyl sulfate. The protein operates within sulfur metabolism; hydrogen sulfide biosynthesis; sulfite from sulfate: step 3/3. Catalyzes the formation of sulfite from phosphoadenosine 5'-phosphosulfate (PAPS) using thioredoxin as an electron donor. This Pectobacterium atrosepticum (strain SCRI 1043 / ATCC BAA-672) (Erwinia carotovora subsp. atroseptica) protein is Phosphoadenosine 5'-phosphosulfate reductase.